Consider the following 325-residue polypeptide: G-protein coupled receptor E6 (325 aa).

The next 7 membrane-spanning stretches (helical) occupy residues 45–65, 71–91, 106–126, 145–165, 198–218, 233–253, and 274–294; these read LFGT…MGFF, FTPS…LWLM, IVTE…NVGM, PAAI…VIAV, LVAK…GTAL, AICV…LTAM, and VFIY…MFTG.

This sequence belongs to the G-protein coupled receptor 1 family.

It is found in the host membrane. This is G-protein coupled receptor E6 (E6) from Equus caballus (Horse).